A 123-amino-acid polypeptide reads, in one-letter code: Holo-[acyl-carrier-protein] synthase (123 aa).

Asp8 and Glu56 together coordinate Mg(2+).

This sequence belongs to the P-Pant transferase superfamily. AcpS family. Requires Mg(2+) as cofactor.

It is found in the cytoplasm. It carries out the reaction apo-[ACP] + CoA = holo-[ACP] + adenosine 3',5'-bisphosphate + H(+). Functionally, transfers the 4'-phosphopantetheine moiety from coenzyme A to a Ser of acyl-carrier-protein. The polypeptide is Holo-[acyl-carrier-protein] synthase (Clostridium botulinum (strain Eklund 17B / Type B)).